A 2873-amino-acid chain; its full sequence is WD repeat-containing protein 87 (2873 aa).

7 WD repeats span residues 108–146 (PCRFNISCLCYDPEMKMLLSGILGAVVTWVIELGGTGLQ), 199–239 (TSSG…PLHS), 242–283 (AHQS…RRLE), 368–407 (SILDQAVDWAYDPGKEELFVATGSSEVLVFDTTRCPCPAK), 415–460 (NSQD…RLEK), 516–553 (LSSCHLTHLILLPKSVGAITETNCLRLWKFHDFLSSGS), and 565–604 (LHLCAITSFDVCLSLSLFVTGSADGSVRIWDFHGRLIGIL). Disordered regions lie at residues 1049–1124 (FSLD…ESGT), 1177–1199 (DKRDKKATAQKLKKKHKKKGKEA), 1392–1413 (EKKTFQKSPKQGRKAVQKERKV), 1531–1607 (SKSK…QEER), and 2199–2338 (KRKE…EEVD). Basic residues-rich tracts occupy residues 1089-1101 (VKKHSQKWLRGLK) and 1187-1197 (KLKKKHKKKGK). Positions 1549–1574 (EVSREGEEKEQQVTEEQRHIQEEHKW) are enriched in basic and acidic residues. Over residues 1575-1586 (ARIHRKRARAEK) the composition is skewed to basic residues. Composition is skewed to basic and acidic residues over residues 1587–1607 (KRAQEERKLAQEEEKLAQEER) and 2204–2213 (KRGDKPKEKF). Acidic residues predominate over residues 2244–2276 (SSEEEEEREEEEEREEEEEREEEEERKEEEEGE). Over residues 2277–2287 (EKQVEKEEEEK) the composition is skewed to basic and acidic residues. Residues 2304–2337 (EVFEEKEEIMSEEETESLSDEEEEEESCSLEEEV) are compositionally biased toward acidic residues.

This Homo sapiens (Human) protein is WD repeat-containing protein 87 (WDR87).